The sequence spans 229 residues: Histone H1 (229 aa).

2 disordered regions span residues 1–52 and 125–229; these read MADT…SSHP and APAL…RTRK. Basic residues predominate over residues 32 to 45; that stretch reads KEKKKVIAAKKPKS. One can recognise an H15 domain in the interval 50-119; sequence SHPSFFEMIS…KVKNSFKLPS (70 aa). A compositionally biased stretch (low complexity) spans 125-138; that stretch reads APALAKKPTIPKPK. Over residues 139-160 the composition is skewed to basic residues; that stretch reads VAAKPKTAKIGAKPKAKAKVAA. Composition is skewed to low complexity over residues 161–177 and 185–205; these read KTKATTKTVAKKIPAAK and KPKTVAAKPAKVAKTAAVASP. Residues 206 to 229 show a composition bias toward basic residues; sequence GKKKAVPVKKVKTVKSPAGKRTRK.

This sequence belongs to the histone H1/H5 family.

Its subcellular location is the nucleus. It localises to the chromosome. Functionally, histones H1 are necessary for the condensation of nucleosome chains into higher-order structures. The sequence is that of Histone H1 from Euphorbia esula (Leafy spurge).